Consider the following 436-residue polypeptide: Trigger factor (436 aa).

In terms of domain architecture, PPIase FKBP-type spans 161–246 (EDQLNIDFVG…VNTVSEPKLP (86 aa)).

Belongs to the FKBP-type PPIase family. Tig subfamily.

The protein localises to the cytoplasm. It catalyses the reaction [protein]-peptidylproline (omega=180) = [protein]-peptidylproline (omega=0). Involved in protein export. Acts as a chaperone by maintaining the newly synthesized protein in an open conformation. Functions as a peptidyl-prolyl cis-trans isomerase. This chain is Trigger factor, found in Pseudomonas syringae pv. syringae (strain B728a).